Here is a 226-residue protein sequence, read N- to C-terminus: Hand transcription factor 1 (226 aa).

Residues 1 to 15 (MVKSTTAGNNAVSSL) show a composition bias toward polar residues. Residues 1–35 (MVKSTTAGNNAVSSLESTDSKKSRKEKSREKEHRR) form a disordered region. Residues 23–36 (SRKEKSREKEHRRA) form a basic motif region. The bHLH domain maps to 23-77 (SRKEKSREKEHRRAQCINSAFEILQQHIPYLKSEERKSLPKIKTLRLAMQYIDHL). The interval 37 to 77 (QCINSAFEILQQHIPYLKSEERKSLPKIKTLRLAMQYIDHL) is helix-loop-helix motif.

The protein resides in the nucleus. Its function is as follows. Probable transcription factor which regulates early embryonic myogenesis, in cooperation with transcription factors unc-120 and hlh-1. Involved in controlling the number and position of somatic gonadal precursor cells (SGPs) in the gonadal primordium, and embryonic body shape. This Caenorhabditis elegans protein is Hand transcription factor 1.